The sequence spans 4700 residues: StAR-related lipid transfer protein 9 (4700 aa).

In terms of domain architecture, Kinesin motor spans 3–384 (NVQVAVRVRP…LRYASSAKNI (382 aa)). Position 103-110 (103-110 (GQTGSGKT)) interacts with ATP. Residues 310-328 (GDSGILSSPSGTSSGGAPS) show a composition bias toward low complexity. The segment at 310–331 (GDSGILSSPSGTSSGGAPSRRQ) is disordered. The FHA domain occupies 498–569 (LKEGTTKIGR…LTQGAVITLG (72 aa)). Basic and acidic residues-rich tracts occupy residues 631 to 646 (QCDE…ETSH) and 867 to 877 (TSEKTSSEEHL). 4 disordered regions span residues 631–652 (QCDE…QIQQ), 851–880 (WDPS…LPQA), 1057–1104 (KKSS…SDTD), and 1128–1188 (ERKW…GFTA). Residues 1134–1146 (PEPENSESDDSQL) are compositionally biased toward acidic residues. The residue at position 1203 (serine 1203) is a Phosphoserine. 22 disordered regions span residues 1939 to 1976 (MPGE…EGKN), 2014 to 2043 (ERNP…RVNN), 2088 to 2179 (DQKE…PARD), 2254 to 2290 (ESQV…QEEN), 2377 to 2403 (GVEH…SSEA), 2416 to 2444 (MGSH…SPQD), 2479 to 2539 (LNKV…PRLL), 2589 to 2613 (RVAG…EGEA), 2642 to 2678 (LSAD…RKRR), 2696 to 2731 (SSSS…PVEE), 2765 to 2789 (PQET…PRTL), 2821 to 2852 (VQNS…ASPK), 2892 to 2955 (SKHS…PCRQ), 3124 to 3144 (NAQV…PHTL), 3199 to 3241 (HTCS…GLDG), 3274 to 3412 (SLRQ…MPST), 3564 to 3611 (IALG…KGSA), 3766 to 3790 (SDTS…AEET), 3830 to 3884 (LPSV…RVQK), 3906 to 3991 (ASTQ…SPKL), 4033 to 4086 (PEKV…QHLS), and 4153 to 4193 (PGGL…EWSK). Positions 2088–2100 (DQKEQEKTDHAFR) are enriched in basic and acidic residues. A compositionally biased stretch (polar residues) spans 2103–2118 (SSGNPLPSKDQPSSPR). The segment covering 2119–2129 (QTDDTVFRDSE) has biased composition (basic and acidic residues). Residues 2137 to 2148 (SIGNHPQVQKIT) show a composition bias toward polar residues. The segment covering 2153–2169 (RSREGVRESEPVREHTH) has biased composition (basic and acidic residues). Polar residues predominate over residues 2254-2266 (ESQVAEHVSSSNQ). 2 stretches are compositionally biased toward basic and acidic residues: residues 2267–2279 (EEPK…EEMP) and 2379–2391 (EHQD…RSHS). A compositionally biased stretch (basic and acidic residues) spans 2500–2510 (QASKPRQKAEK). The span at 2642-2653 (LSADSFESLPNT) shows a compositional bias: polar residues. Low complexity predominate over residues 2712–2729 (PSSADPLAPDSPRSSAPV). Positions 2916–2925 (APCRHPREAL) are enriched in basic and acidic residues. A compositionally biased stretch (polar residues) spans 3124–3141 (NAQVCQTNPEPPATTQGP). 3 stretches are compositionally biased toward polar residues: residues 3274–3285 (SLRQNETPQPAA), 3320–3339 (SSPT…QELN), and 3368–3387 (SGKS…QKAS). Residues 3388-3397 (SRLDDGTTDH) are compositionally biased toward basic and acidic residues. The span at 3857-3872 (SSPSPSSPHSPGLFPS) shows a compositional bias: low complexity. Polar residues predominate over residues 3906 to 3924 (ASTQEPGLSPGSLTLSAPS). Residues 3958–3975 (LGGSQRGRSSLQRSNGRS) show a composition bias toward low complexity. The segment covering 4048–4065 (EPSQWQSRTENGGESSAS) has biased composition (polar residues). The stretch at 4334–4387 (SDIELMLQDYQQAHEEAKVEIARARDQLRERTEQEKLRIHQKIISQLLKEEDKL) forms a coiled coil. Over residues 4397–4411 (CTSSNGSLSSGMTSG) the composition is skewed to low complexity. Residues 4397–4419 (CTSSNGSLSSGMTSGYNSSPALS) are disordered. The region spanning 4483-4700 (SYQDLAKHVV…IARLASFLGR (218 aa)) is the START domain.

The protein belongs to the TRAFAC class myosin-kinesin ATPase superfamily. Kinesin family. As to quaternary structure, interacts with ATAD3A. Expressed in the central nervous system, muscle cells (heart and skeletal muscle), pancreas, prostate and lung.

It is found in the cytoplasm. The protein resides in the cytoskeleton. It localises to the microtubule organizing center. The protein localises to the centrosome. Its subcellular location is the centriole. It is found in the nucleus. Its function is as follows. Microtubule-dependent motor protein required for spindle pole assembly during mitosis. Required to stabilize the pericentriolar material (PCM). This Homo sapiens (Human) protein is StAR-related lipid transfer protein 9 (STARD9).